The sequence spans 333 residues: Holliday junction branch migration complex subunit RuvB (333 aa).

A large ATPase domain (RuvB-L) region spans residues 1 to 182 (MDERLVSGSA…FGVISRLEYY (182 aa)). ATP is bound by residues Leu-21, Arg-22, Gly-63, Lys-66, Thr-67, Thr-68, 129–131 (EDY), Arg-172, Tyr-182, and Arg-219. Thr-67 contacts Mg(2+). Residues 183–253 (QVDQLAQIIE…LAVEALERLQ (71 aa)) are small ATPAse domain (RuvB-S). Residues 256-333 (RLGLDHIDHK…AHLGMEVPKR (78 aa)) are head domain (RuvB-H). Positions 311 and 316 each coordinate DNA.

It belongs to the RuvB family. In terms of assembly, homohexamer. Forms an RuvA(8)-RuvB(12)-Holliday junction (HJ) complex. HJ DNA is sandwiched between 2 RuvA tetramers; dsDNA enters through RuvA and exits via RuvB. An RuvB hexamer assembles on each DNA strand where it exits the tetramer. Each RuvB hexamer is contacted by two RuvA subunits (via domain III) on 2 adjacent RuvB subunits; this complex drives branch migration. In the full resolvosome a probable DNA-RuvA(4)-RuvB(12)-RuvC(2) complex forms which resolves the HJ.

The protein localises to the cytoplasm. The enzyme catalyses ATP + H2O = ADP + phosphate + H(+). Functionally, the RuvA-RuvB-RuvC complex processes Holliday junction (HJ) DNA during genetic recombination and DNA repair, while the RuvA-RuvB complex plays an important role in the rescue of blocked DNA replication forks via replication fork reversal (RFR). RuvA specifically binds to HJ cruciform DNA, conferring on it an open structure. The RuvB hexamer acts as an ATP-dependent pump, pulling dsDNA into and through the RuvAB complex. RuvB forms 2 homohexamers on either side of HJ DNA bound by 1 or 2 RuvA tetramers; 4 subunits per hexamer contact DNA at a time. Coordinated motions by a converter formed by DNA-disengaged RuvB subunits stimulates ATP hydrolysis and nucleotide exchange. Immobilization of the converter enables RuvB to convert the ATP-contained energy into a lever motion, pulling 2 nucleotides of DNA out of the RuvA tetramer per ATP hydrolyzed, thus driving DNA branch migration. The RuvB motors rotate together with the DNA substrate, which together with the progressing nucleotide cycle form the mechanistic basis for DNA recombination by continuous HJ branch migration. Branch migration allows RuvC to scan DNA until it finds its consensus sequence, where it cleaves and resolves cruciform DNA. The sequence is that of Holliday junction branch migration complex subunit RuvB from Geobacillus thermodenitrificans (strain NG80-2).